We begin with the raw amino-acid sequence, 834 residues long: RNA-binding protein 12B-B (834 aa).

The region spanning 154–229 is the RRM 1 domain; it reads PYLFLRGLPY…RFIEVMQGSE (76 aa). The disordered stretch occupies residues 237-277; it reads GTATEGGDTPRMRSEEHSPSRRINGRHFRKRSHSKSPRARS. Residues 244–255 are compositionally biased toward basic and acidic residues; that stretch reads DTPRMRSEEHSP. The segment covering 259–277 has biased composition (basic residues); sequence INGRHFRKRSHSKSPRARS. RRM domains are found at residues 283-359 and 401-478; these read FYVH…PVSR and LCIY…LISE. 2 disordered regions span residues 546–572 and 621–643; these read GYFR…PWEE and HFRR…RSRE. Over residues 550-572 the composition is skewed to basic and acidic residues; sequence QSDRCSPEDFRHSPEDYRHPWEE. At S701 the chain carries Phosphoserine. The region spanning 758-834 is the RRM 4 domain; that stretch reads IRVMISNLPF…GPRKVKLSLL (77 aa).

This is RNA-binding protein 12B-B (Rbm12b2) from Mus musculus (Mouse).